The sequence spans 259 residues: MRILVTNDDGIYSNGIRAAVKALSSLGEVYVVAPLFQRSASGRAMTLHRPIRARLVDVPGAKVAYGIDGTPTDSVIFALARFGDFDLAVSGINLGENLSTEITVSGTASAAIEAATHEVPSIAISLEVDWKKTLGEGEGIDFSVASHFLKRITRAVLEKGLPEGVDMLNVNVPSNATPETEIAITRLARKRYCPTIEERVDPRGHPYYWIVGQKREEFEPGTDAYALKIERKVSVTPINIDMTARVNFEEVRKVLFAQP.

4 residues coordinate a divalent metal cation: Asp8, Asp9, Ser39, and Asn93.

It belongs to the SurE nucleotidase family. A divalent metal cation serves as cofactor.

Its subcellular location is the cytoplasm. The catalysed reaction is a ribonucleoside 5'-phosphate + H2O = a ribonucleoside + phosphate. Functionally, nucleotidase that shows phosphatase activity on nucleoside 5'-monophosphates. This Thermococcus kodakarensis (strain ATCC BAA-918 / JCM 12380 / KOD1) (Pyrococcus kodakaraensis (strain KOD1)) protein is 5'-nucleotidase SurE.